The chain runs to 149 residues: Small ribosomal subunit protein uS15 (149 aa).

Residues 1–14 are compositionally biased toward basic residues; sequence MGRMHTHRHGKSHS. The tract at residues 1–20 is disordered; sequence MGRMHTHRHGKSHSIRPATL.

The protein belongs to the universal ribosomal protein uS15 family. As to quaternary structure, part of the 30S ribosomal subunit.

In Nitrosopumilus maritimus (strain SCM1), this protein is Small ribosomal subunit protein uS15.